The primary structure comprises 90 residues: UPF0237 protein NMB1653 (90 aa).

In terms of domain architecture, ACT spans 5 to 83; sequence VITVIGKDRV…LDIRMQNEEI (79 aa).

It belongs to the UPF0237 family.

The chain is UPF0237 protein NMB1653 from Neisseria meningitidis serogroup B (strain ATCC BAA-335 / MC58).